Reading from the N-terminus, the 20-residue chain is Protein PR-L1 (20 aa).

Belongs to the BetVI family.

This chain is Protein PR-L1, found in Lupinus luteus (European yellow lupine).